The chain runs to 398 residues: Arylacetamide deacetylase (398 aa).

Topologically, residues 1–5 (MGKTI) are cytoplasmic. A helical; Signal-anchor for type II membrane protein transmembrane segment spans residues 6–26 (SLLISVVLVAYYLYIPLPDAI). The Lumenal portion of the chain corresponds to 27 to 398 (EEPWKVVWET…QYLSWLIKNL (372 aa)). The short motif at 110 to 112 (HGG) is the Involved in the stabilization of the negatively charged intermediate by the formation of the oxyanion hole element. A disulfide bridge connects residues C115 and C339. S188 is a catalytic residue. The N-linked (GlcNAc...) asparagine glycan is linked to N281. Catalysis depends on residues D342 and H372.

It belongs to the 'GDXG' lipolytic enzyme family. N-glycosylated. As to expression, highest levels in liver with lower levels in jejunum and kidney.

Its subcellular location is the endoplasmic reticulum membrane. It is found in the microsome membrane. It carries out the reaction a triacylglycerol + H2O = a diacylglycerol + a fatty acid + H(+). Functionally, displays cellular triglyceride lipase activity in liver, increases the levels of intracellular fatty acids derived from the hydrolysis of newly formed triglyceride stores and plays a role in very low-density lipoprotein assembly. Displays serine esterase activity in liver. Deacetylates a variety of arylacetamide substrates, including xenobiotic compounds and procarcinogens, converting them to the primary arylamide compounds and increasing their toxicity. The polypeptide is Arylacetamide deacetylase (Aadac) (Mus musculus (Mouse)).